The sequence spans 29 residues: Cyclotide mden-B (29 aa).

A cross-link (cyclopeptide (Gly-Asn)) is located at residues 1-29; sequence GLPICGETCFTGKCYTPGCTCSYPICKKN. 3 disulfides stabilise this stretch: C5-C19, C9-C21, and C14-C26.

This sequence belongs to the cyclotide family. Moebius subfamily. In terms of processing, this is a cyclic peptide.

Its function is as follows. Probably participates in a plant defense mechanism. In Melicytus dentatus (Tree violet), this protein is Cyclotide mden-B.